The following is a 240-amino-acid chain: Axial regulator YABBY 3 (240 aa).

The C4-type zinc finger occupies 30–57 (CSFCDTVLAVSVPPSSLFKTVTVRCGHC). The interval 135–156 (DHLQEMPRPPPANRPPEKRQRV) is disordered.

It belongs to the YABBY family. In terms of assembly, interacts with SPL/NZZ. Interacts with SPEAR2. Binds to LUG and LUH; these complexes promote adaxial cell identity in leaves as well as embryonic shoot apical meristem (SAM) initiation and postembryonic SAM maintenance. As to expression, expressed in abaxial regions of lateral aerial organ primordia leading to cotyledons, leaves, flower meristems, sepals, petals, stamen and carpels, but not in roots.

The protein localises to the nucleus. Its function is as follows. Involved in the abaxial cell fate determination during embryogenesis and organogenesis. Regulates the initiation of embryonic shoot apical meristem (SAM) development. Contributes to the repression of KNOX genes (STM, KNAT1/BP and KNAT2) to avoid ectopic meristems. Binds DNA without sequence specificity. The protein is Axial regulator YABBY 3 (YAB3) of Arabidopsis thaliana (Mouse-ear cress).